The sequence spans 85 residues: UPF0434 protein HNE_3545 (85 aa).

The protein belongs to the UPF0434 family.

The polypeptide is UPF0434 protein HNE_3545 (Hyphomonas neptunium (strain ATCC 15444)).